We begin with the raw amino-acid sequence, 616 residues long: General alpha-glucoside permease (616 aa).

Residues 1-115 (MKNIISLVSK…AALWSILVST (115 aa)) lie on the Cytoplasmic side of the membrane. The segment covering 15-27 (SKNEDKNISESSR) has biased composition (basic and acidic residues). The disordered stretch occupies residues 15–40 (SKNEDKNISESSRDIVNQQEVFNTED). A helical transmembrane segment spans residues 116–136 (TLVMEGYDTALLSALYALPVF). Residues 137 to 160 (QRKFGTLNGEGSYEITSQWQIGLN) lie on the Extracellular side of the membrane. Residues 161 to 181 (MCVLCGEMIGLQITTYMVEFM) traverse the membrane as a helical segment. Topologically, residues 182–191 (GNRYTMITAL) are cytoplasmic. A helical transmembrane segment spans residues 192-212 (GLLTAYIFILYYCKSLAMIAV). The Extracellular portion of the chain corresponds to 213–214 (GQ). Residues 215-235 (ILSAIPWGCFQSLAVTYASEV) traverse the membrane as a helical segment. At 236–242 (CPLALRY) the chain is on the cytoplasmic side. Residues 243 to 263 (YMTSYSNICWLFGQIFASGIM) traverse the membrane as a helical segment. The Extracellular portion of the chain corresponds to 264 to 278 (KNSQENLGNSDLGYK). The helical transmembrane segment at 279 to 299 (LPFALQWIWPAPLMIGIFFAP) threads the bilayer. The Cytoplasmic segment spans residues 300–373 (ESPWWLVRKD…VNGRRTRLAC (74 aa)). The chain crosses the membrane as a helical span at residues 374-394 (LTWVAQNSSGAVLLGYSTYFF). Residues 395 to 404 (ERAGMATDKA) lie on the Extracellular side of the membrane. Residues 405-425 (FTFSLIQYCLGLAGTLCSWVI) traverse the membrane as a helical segment. Over 426–433 (SGRVGRWT) the chain is Cytoplasmic. A helical membrane pass occupies residues 434-454 (ILTYGLAFQMVCLFIIGGMGF). Residues 455–466 (GSGSSASNGAGG) are Extracellular-facing. The chain crosses the membrane as a helical span at residues 467 to 487 (LLLALSFFYNAGIGAVVYCIV). The Cytoplasmic portion of the chain corresponds to 488–504 (AEIPSAELRTKTIVLAR). A helical transmembrane segment spans residues 505–525 (ICYNLMAVINAILTPYMLNVS). Over 526-532 (DWNWGAK) the chain is Extracellular. Residues 533–553 (TGLYWGGFTAVTLAWVIIDLP) form a helical membrane-spanning segment. Topologically, residues 554–616 (ETTGRTFSEI…QRELNAADKC (63 aa)) are cytoplasmic. Residues 587 to 616 (GKTQHDSLADESISQSSSIKQRELNAADKC) form a disordered region. A compositionally biased stretch (basic and acidic residues) spans 606-616 (KQRELNAADKC).

Belongs to the major facilitator superfamily. Sugar transporter (TC 2.A.1.1) family.

It is found in the cell membrane. Its function is as follows. High-affinity uptake of alpha-glucosides such as maltose, turanose, isomaltose, alpha-methylglucoside, maltotriose, palatinose, trehalose, melezitose and glucose. Acts with the concomitant transport of protons into the cell (symport system). Provides an alternative and minor mechanism for growth on trehalose carbon source by transporting trehalose into the cytoplasm for conversion to glucose by neutral trehalase NTH1. The polypeptide is General alpha-glucoside permease (Saccharomyces cerevisiae (strain CEN.PK113-7D) (Baker's yeast)).